Reading from the N-terminus, the 159-residue chain is Protein HydD (159 aa).

This sequence belongs to the peptidase A31 family.

The sequence is that of Protein HydD (hydD) from Wolinella succinogenes (strain ATCC 29543 / DSM 1740 / CCUG 13145 / JCM 31913 / LMG 7466 / NCTC 11488 / FDC 602W) (Vibrio succinogenes).